The sequence spans 400 residues: uncharacterized protein (400 aa).

This sequence belongs to the mimivirus R640 family.

The protein localises to the virion. This is an uncharacterized protein from Acanthamoeba polyphaga (Amoeba).